Here is a 581-residue protein sequence, read N- to C-terminus: Prolactin receptor (581 aa).

The first 24 residues, methionine 1 to glycine 24, serve as a signal peptide directing secretion. At glutamine 25 to aspartate 234 the chain is on the extracellular side. Fibronectin type-III domains lie at proline 27–proline 127 and proline 129–aspartate 229. A disulfide bond links cysteine 36 and cysteine 46. N-linked (GlcNAc...) asparagine glycosylation occurs at asparagine 59. Residues cysteine 75 and cysteine 86 are joined by a disulfide bond. Residue asparagine 132 is glycosylated (N-linked (GlcNAc...) asparagine). Aspartate 211 and histidine 212 together coordinate Zn(2+). The WSXWS motif motif lies at tryptophan 215–serine 219. A glycan (N-linked (GlcNAc...) asparagine) is linked at asparagine 233. The helical transmembrane segment at threonine 235–leucine 258 threads the bilayer. The Cytoplasmic portion of the chain corresponds to lysine 259–proline 581. Positions isoleucine 267–lysine 275 match the Box 1 motif motif. Disordered stretches follow at residues glutamate 321–glutamate 362 and leucine 462–threonine 502. The segment covering proline 329 to serine 349 has biased composition (basic and acidic residues).

It belongs to the type I cytokine receptor family. Type 1 subfamily. As to quaternary structure, interacts with SMARCA1. Interacts with NEK3 and VAV2 and this interaction is prolactin-dependent.

The protein localises to the membrane. Its function is as follows. This is a receptor for the anterior pituitary hormone prolactin. The chain is Prolactin receptor (PRLR) from Cervus elaphus (Red deer).